The following is a 118-amino-acid chain: Ribonuclease P protein component (118 aa).

The protein belongs to the RnpA family. Consists of a catalytic RNA component (M1 or rnpB) and a protein subunit.

It carries out the reaction Endonucleolytic cleavage of RNA, removing 5'-extranucleotides from tRNA precursor.. In terms of biological role, RNaseP catalyzes the removal of the 5'-leader sequence from pre-tRNA to produce the mature 5'-terminus. It can also cleave other RNA substrates such as 4.5S RNA. The protein component plays an auxiliary but essential role in vivo by binding to the 5'-leader sequence and broadening the substrate specificity of the ribozyme. This chain is Ribonuclease P protein component, found in Rickettsia peacockii (strain Rustic).